The sequence spans 144 residues: D-aminoacyl-tRNA deacylase (144 aa).

A Gly-cisPro motif, important for rejection of L-amino acids motif is present at residues 136 to 137; that stretch reads GP.

This sequence belongs to the DTD family. As to quaternary structure, homodimer.

The protein resides in the cytoplasm. The catalysed reaction is glycyl-tRNA(Ala) + H2O = tRNA(Ala) + glycine + H(+). It carries out the reaction a D-aminoacyl-tRNA + H2O = a tRNA + a D-alpha-amino acid + H(+). An aminoacyl-tRNA editing enzyme that deacylates mischarged D-aminoacyl-tRNAs. Also deacylates mischarged glycyl-tRNA(Ala), protecting cells against glycine mischarging by AlaRS. Acts via tRNA-based rather than protein-based catalysis; rejects L-amino acids rather than detecting D-amino acids in the active site. By recycling D-aminoacyl-tRNA to D-amino acids and free tRNA molecules, this enzyme counteracts the toxicity associated with the formation of D-aminoacyl-tRNA entities in vivo and helps enforce protein L-homochirality. The sequence is that of D-aminoacyl-tRNA deacylase from Actinobacillus succinogenes (strain ATCC 55618 / DSM 22257 / CCUG 43843 / 130Z).